Reading from the N-terminus, the 397-residue chain is MTATDPVANLQTLIRCASVTPAEGGALTALADMLLPLGFKVERMTASEAGTPDIENLYARLGTEGPHLMFAGHTDVVPVGDAASWSHPPFAADIAGGELFGRGAVDMKGGIACFAAAVARHIEKHGPPAGSISFLITGDEEGPAINGTVKLLQWAAERGEQWDASLVGEPTNPDQLGDMIKIGRRGSISGFITVHGVQGHAAYPHLADNPVRSIVKLTEALLDPPFDAGTDNFQPSNLEVTTIDVGNAATNVIPAKATAAFNIRFNDTWTVETLRAEILARLDAAAADQTLRPGREPTKYDITWSDRPSQVFLTRNNALIASLSSAVENVTGHTPKLSTTGGTSDARFIKDYCPVVEFGLVGQTMHMVDERVAVADLETLTEIYETFIQRWFANAEL.

His73 is a binding site for Zn(2+). Asp75 is a catalytic residue. Position 106 (Asp106) interacts with Zn(2+). Catalysis depends on Glu140, which acts as the Proton acceptor. Residues Glu141, Glu169, and His366 each contribute to the Zn(2+) site.

It belongs to the peptidase M20A family. DapE subfamily. As to quaternary structure, homodimer. It depends on Zn(2+) as a cofactor. Co(2+) serves as cofactor.

It carries out the reaction N-succinyl-(2S,6S)-2,6-diaminopimelate + H2O = (2S,6S)-2,6-diaminopimelate + succinate. It functions in the pathway amino-acid biosynthesis; L-lysine biosynthesis via DAP pathway; LL-2,6-diaminopimelate from (S)-tetrahydrodipicolinate (succinylase route): step 3/3. Its function is as follows. Catalyzes the hydrolysis of N-succinyl-L,L-diaminopimelic acid (SDAP), forming succinate and LL-2,6-diaminopimelate (DAP), an intermediate involved in the bacterial biosynthesis of lysine and meso-diaminopimelic acid, an essential component of bacterial cell walls. The polypeptide is Succinyl-diaminopimelate desuccinylase (Rhizobium rhizogenes (strain K84 / ATCC BAA-868) (Agrobacterium radiobacter)).